Here is a 263-residue protein sequence, read N- to C-terminus: Endonuclease 8 (263 aa).

Pro2 serves as the catalytic Schiff-base intermediate with DNA. Residue Glu3 is the Proton donor of the active site. Residue Lys53 is the Proton donor; for beta-elimination activity of the active site. DNA contacts are provided by Gln70, Arg125, and Asn169. The FPG-type zinc finger occupies 229-263; that stretch reads KVFHRDGEPCERCGGIIEKTTLSSRPFYWCPGCQH. Residue Arg253 is the Proton donor; for delta-elimination activity of the active site.

It belongs to the FPG family. It depends on Zn(2+) as a cofactor.

The enzyme catalyses 2'-deoxyribonucleotide-(2'-deoxyribose 5'-phosphate)-2'-deoxyribonucleotide-DNA = a 3'-end 2'-deoxyribonucleotide-(2,3-dehydro-2,3-deoxyribose 5'-phosphate)-DNA + a 5'-end 5'-phospho-2'-deoxyribonucleoside-DNA + H(+). Functionally, involved in base excision repair of DNA damaged by oxidation or by mutagenic agents. Acts as a DNA glycosylase that recognizes and removes damaged bases. Has a preference for oxidized pyrimidines, such as thymine glycol, 5,6-dihydrouracil and 5,6-dihydrothymine. Has AP (apurinic/apyrimidinic) lyase activity and introduces nicks in the DNA strand. Cleaves the DNA backbone by beta-delta elimination to generate a single-strand break at the site of the removed base with both 3'- and 5'-phosphates. This chain is Endonuclease 8, found in Escherichia coli (strain UTI89 / UPEC).